Here is a 481-residue protein sequence, read N- to C-terminus: UDP-glycosyltransferase 73B3 (481 aa).

Residue His-21 is the Proton acceptor of the active site. Residue His-21 coordinates an anthocyanidin. Residue Asp-132 is the Charge relay of the active site. Ala-355, Gln-357, His-372, Trp-375, Asn-376, Ser-377, and Glu-380 together coordinate UDP-alpha-D-glucose. Ala-395 contacts an anthocyanidin. Residues Glu-396 and Gln-397 each coordinate UDP-alpha-D-glucose.

This sequence belongs to the UDP-glycosyltransferase family. In terms of tissue distribution, expressed in roots and flowers.

It catalyses the reaction a flavonol + UDP-alpha-D-glucose = a flavonol 3-O-beta-D-glucoside + UDP + H(+). Functionally, possesses quercetin 3-O-glucosyltransferase activity in vitro. Also active in vitro on benzoates and benzoate derivatives. Involved in stress or defense responses. This Arabidopsis thaliana (Mouse-ear cress) protein is UDP-glycosyltransferase 73B3 (UGT73B3).